We begin with the raw amino-acid sequence, 200 residues long: Inducible T-cell costimulator (200 aa).

The N-terminal stretch at 1–20 (MKPYFCRVFVFCFLIRLLTG) is a signal peptide. Residues 21–144 (EINGSADHRM…QLCCQLKLWL (124 aa)) lie on the Extracellular side of the membrane. N23 carries an N-linked (GlcNAc...) asparagine glycan. The Ig-like V-type domain occupies 30-133 (MFSFHNGGVQ…LSGGYLHIYE (104 aa)). Cystine bridges form between C42-C109 and C63-C83. N-linked (GlcNAc...) asparagine glycosylation is found at N89 and N123. The chain crosses the membrane as a helical span at residues 145-165 (PVGCAAFVVVLLFGCILIIWF). Residues 166–200 (SKKKYGSSVHDPNSEYMFMAAVNTNKKSRLAGVTS) lie on the Cytoplasmic side of the membrane.

As to quaternary structure, homodimer; disulfide-linked. Interacts with ICOSLG. Interacts with PIK3R1. Interacts with TBK1; this interaction is critical for the maturation of T follicular regulatory cells. In terms of processing, N-glycosylated. Expressed on activated T-cells and resting memory T-cells. High expression seen in the thymic medulla and in the germinal centers and T-cell zones of lymph nodes and Peyer patches. Expressed at low levels in the spleen.

The protein resides in the cell membrane. Its function is as follows. Stimulatory receptor expressed in activated or antigen-experienced T-cells that plays an important role in the immune response. Upon binding to its ligand ICOSL expressed on antigen presenting cells (APCs), delivers costimulatory signals that enhances all basic T-cell responses to a foreign antigen, namely proliferation, secretion of lymphokines including IL10, up-regulation of molecules that mediate cell-cell interaction, and effective help for antibody secretion by B-cells. Also acts as a costimulatory receptor critical for the differentiation of T follicular regulatory cells upon immune challenges such as viral infection. Mechanistically, potentiates TCR-induced calcium flux by augmenting PLCG1 activation and actin remodeling. In addition, activates PI3K signaling pathways independently of calcium flux. Essential both for efficient interaction between T and B-cells and for normal antibody responses to T-cell dependent antigens. Prevents the apoptosis of pre-activated T-cells. Plays a critical role in CD40-mediated class switching of immunoglobin isotypes. In Mus musculus (Mouse), this protein is Inducible T-cell costimulator (Icos).